A 699-amino-acid chain; its full sequence is SPS-sensor serine protease component SSY5 (699 aa).

Disordered regions lie at residues 1-113 (MVRF…LQGF) and 129-158 (VKEEESQDTQNTLDVSSSTSSTLATSGNAR). The propeptide occupies 1–381 (MVRFFGLNKK…YCVKDYIKKA (381 aa)). The span at 24-38 (NEQNAAETSSSNVSG) shows a compositional bias: polar residues. Over residues 39 to 51 (NEERIDPNSHDAN) the composition is skewed to basic and acidic residues. The span at 52–78 (PENANNDDASTTFGSSIQSSSIFSRGR) shows a compositional bias: low complexity. Positions 83–93 (TGASSSMATSE) are enriched in polar residues. 2 stretches are compositionally biased toward low complexity: residues 97 to 109 (HSSGHSGSKNSKN) and 144 to 154 (SSSTSSTLATS). The segment at 459-699 (FAITCAHVVL…QWDIDPQLDG (241 aa)) is serine protease. Catalysis depends on charge relay system residues His-465, Asp-545, and Ser-640.

The protein belongs to the peptidase S64 family. Component of the plasma membrane SPS (SSY1-PTR3-SSY5) amino acid sensor complex. The propeptide is autoproteolytically cleaved from the catalytic domain but remains associated, forming an inactive protease complex. This processing occurs even in the absence of signaling.

It is found in the cell membrane. In terms of biological role, protease component of the SPS-sensor system, which regulates the expression of several amino acid-metabolizing enzymes and amino acid- and peptide-permeases in response to extracellular amino acid levels by controlling the activity of two transcription factors, STP1 and STP2. Catalyzes the activation of these transcription factors, which are synthesized as latent cytoplasmic precursors, by proteolytic removal of an N-terminal inhibitory domain containing cytoplasmic retention motifs. SSY5 binds as an inactive protease complex to STP1. In response to extracellular amino acids and dependent on the other SPS-sensor components, the inhibitory propeptide is induced to dissociate, and thereby enables the catalytic domain to process STP1. The polypeptide is SPS-sensor serine protease component SSY5 (SSY5) (Saccharomyces cerevisiae (strain YJM789) (Baker's yeast)).